We begin with the raw amino-acid sequence, 108 residues long: Large ribosomal subunit protein P1 (108 aa).

Positions 67-108 (PAAAPAEAGGEEKKEEEKKEEEEKEEEVSEEEALAGLSALFG) are disordered. The span at 84 to 99 (KKEEEEKEEEVSEEEA) shows a compositional bias: acidic residues.

The protein belongs to the eukaryotic ribosomal protein P1/P2 family. As to quaternary structure, part of the 50S ribosomal subunit. Homodimer, it forms part of the ribosomal stalk which helps the ribosome interact with GTP-bound translation factors. Forms a heptameric uL10/P0(P1)2(P1)2(P1)2 complex, where uL10/P0 forms an elongated spine to which the P1 dimers bind in a sequential fashion.

Its function is as follows. Forms part of the ribosomal stalk, playing a central role in the interaction of the ribosome with GTP-bound translation factors. The stalk complex of P.horikoshii binds to E.coli large subunits and confers on them the ability to interact with eukaryotic elongation factors. Each succesive P1 dimer bound along the P0 spine increases the GTPase activity of elongation factors and increases translation by reconsituted ribosomes. The protein is Large ribosomal subunit protein P1 of Pyrococcus horikoshii (strain ATCC 700860 / DSM 12428 / JCM 9974 / NBRC 100139 / OT-3).